Here is a 1378-residue protein sequence, read N- to C-terminus: Disease resistance protein RRS1 (1378 aa).

The TIR domain maps to 5–146 (EKDEEFVCIS…EIVRDVYETH (142 aa)). An NB-ARC domain is found at 170 to 421 (IGIRCVGIWG…LLEGCGFFPH (252 aa)). Position 179 to 186 (179 to 186 (GMPGIGKT)) interacts with ATP. 9 LRR repeats span residues 498–522 (SEEI…AFKN), 535–553 (NPEV…HSLP), 554–575 (NELR…NFDP), 577–598 (HLVE…TKNL), 621–646 (AENL…RLLR), 665–688 (PPNI…TVKP), 742–766 (LPNM…SIQG), 768–793 (PRFL…SLEI), and 831–854 (PRNL…PLSL). The Nuclear localization signal motif lies at 988-1005 (RNFHCWAPGKVVPKVRKD). Positions 1204 to 1272 (IPAIDEGDLW…YLSEHNHPRP (69 aa)) form a DNA-binding region, WRKY. The interval 1300–1321 (RVFQNKDEPNQPHLPSSSTPPR) is disordered.

As to quaternary structure, interacts with PopP2, a R.solanacearum type III effector.

Its subcellular location is the nucleus. It is found in the cytoplasm. Its function is as follows. Transcription factor. Interacts specifically with the W box (5'-(T)TGAC[CT]-3'), a frequently occurring elicitor-responsive cis-acting element. Also acts as a disease resistance protein involved in resistance to fungal and bacterial pathogens, including R.solanacearum, P.syringae pv. tomato and C.higginsianum. RRS1 mediated resistance depends on salicylic acid and NDR1 (AC O48915). The chain is Disease resistance protein RRS1 from Arabidopsis thaliana (Mouse-ear cress).